The primary structure comprises 353 residues: MPERLITPKGSRDDEAADFSIRPQRLADYVGQPAVREQMEIFIGAARARGEALDHVLIFGPPGLGKTTLSHIIAHELGVNLRHSSGPVLERPGDLAALLTNLEPRDVLFVDEIHRLSPVVEEVLYPAMEDFQLDIVIGEGPAARSIKLDLPPFTLVGATTRAGLLTSPLRDRFGIVQRLEFYNVQDLTRIVQRAAGILGVSIEPAGAAEIARRSRGTPRIANRLLRRVRDYAQIKADGVITDQVADRALDLLDVDVQGFDAQDRRLLLAVIEKFDGGPVGVDSLAAAIGEERGTIEDVVEPYLIQQGFLMRTPRGRMATSNAYRYFGLPAPRMTGVPGDLFGAQEEGGGEGKL.

A large ATPase domain (RuvB-L) region spans residues 1 to 182 (MPERLITPKG…FGIVQRLEFY (182 aa)). ATP-binding positions include isoleucine 21, arginine 22, glycine 63, lysine 66, threonine 67, threonine 68, 129 to 131 (EDF), arginine 172, tyrosine 182, and arginine 219. Residue threonine 67 coordinates Mg(2+). Residues 183–253 (NVQDLTRIVQ…VADRALDLLD (71 aa)) are small ATPAse domain (RuvB-S). The segment at 256–353 (VQGFDAQDRR…QEEGGGEGKL (98 aa)) is head domain (RuvB-H). DNA is bound by residues arginine 292, arginine 311, and arginine 316.

Belongs to the RuvB family. Homohexamer. Forms an RuvA(8)-RuvB(12)-Holliday junction (HJ) complex. HJ DNA is sandwiched between 2 RuvA tetramers; dsDNA enters through RuvA and exits via RuvB. An RuvB hexamer assembles on each DNA strand where it exits the tetramer. Each RuvB hexamer is contacted by two RuvA subunits (via domain III) on 2 adjacent RuvB subunits; this complex drives branch migration. In the full resolvosome a probable DNA-RuvA(4)-RuvB(12)-RuvC(2) complex forms which resolves the HJ.

Its subcellular location is the cytoplasm. It catalyses the reaction ATP + H2O = ADP + phosphate + H(+). Functionally, the RuvA-RuvB-RuvC complex processes Holliday junction (HJ) DNA during genetic recombination and DNA repair, while the RuvA-RuvB complex plays an important role in the rescue of blocked DNA replication forks via replication fork reversal (RFR). RuvA specifically binds to HJ cruciform DNA, conferring on it an open structure. The RuvB hexamer acts as an ATP-dependent pump, pulling dsDNA into and through the RuvAB complex. RuvB forms 2 homohexamers on either side of HJ DNA bound by 1 or 2 RuvA tetramers; 4 subunits per hexamer contact DNA at a time. Coordinated motions by a converter formed by DNA-disengaged RuvB subunits stimulates ATP hydrolysis and nucleotide exchange. Immobilization of the converter enables RuvB to convert the ATP-contained energy into a lever motion, pulling 2 nucleotides of DNA out of the RuvA tetramer per ATP hydrolyzed, thus driving DNA branch migration. The RuvB motors rotate together with the DNA substrate, which together with the progressing nucleotide cycle form the mechanistic basis for DNA recombination by continuous HJ branch migration. Branch migration allows RuvC to scan DNA until it finds its consensus sequence, where it cleaves and resolves cruciform DNA. The sequence is that of Holliday junction branch migration complex subunit RuvB from Thioalkalivibrio sulfidiphilus (strain HL-EbGR7).